The following is a 475-amino-acid chain: Ankyrin repeat, SAM and basic leucine zipper domain-containing protein 1 (475 aa).

The tract at residues 1-24 is disordered; the sequence is MAASALRGPPVAGGGESSESEDDG. Residues Ser-17, Ser-18, and Ser-20 each carry the phosphoserine modification. 6 ANK repeats span residues 45 to 74, 78 to 107, 110 to 144, 148 to 177, 181 to 210, and 214 to 243; these read EKKE…SVDS, YGWT…NASF, DKQS…DPNV, RLMT…EVNT, NGYT…NKML, and DGKM…PLEG. The SAM domain occupies 272–334; that stretch reads SYTAFGDLEV…KILAALKELQ (63 aa).

As to quaternary structure, interacts with DDX4, PIWIL1, RANBP9 and TDRD1.

The protein resides in the cytoplasm. Plays a central role during spermatogenesis by repressing transposable elements and preventing their mobilization, which is essential for the germline integrity. Acts via the piRNA metabolic process, which mediates the repression of transposable elements during meiosis by forming complexes composed of piRNAs and Piwi proteins and governs the methylation and subsequent repression of transposons. Its association with pi-bodies suggests a participation in the primary piRNAs metabolic process. Required prior to the pachytene stage to facilitate the production of multiple types of piRNAs, including those associated with repeats involved in the regulation of retrotransposons. May act by mediating protein-protein interactions during germ cell maturation. This is Ankyrin repeat, SAM and basic leucine zipper domain-containing protein 1 (ASZ1) from Gorilla gorilla gorilla (Western lowland gorilla).